The sequence spans 463 residues: Probable glycosyltransferase 3 (463 aa).

A disordered region spans residues 1 to 20 (MAVTGGGRPAARQQAARGKQ). Over 1–24 (MAVTGGGRPAARQQAARGKQMQRT) the chain is Cytoplasmic. A compositionally biased stretch (low complexity) spans 9–20 (PAARQQAARGKQ). A helical; Signal-anchor for type II membrane protein membrane pass occupies residues 25-47 (FNNVKITLICGFITLLVLRGTVG). At 48–463 (INLLTYGVGG…ALKMDAKIES (416 aa)) the chain is on the lumenal side. The interval 82 to 125 (EIRSDTDDDDDDEEEEPLGVDASTTTTTNSTTTTATAARRRSSN) is disordered. Acidic residues predominate over residues 87 to 99 (TDDDDDDEEEEPL). Over residues 103–118 (ASTTTTTNSTTTTATA) the composition is skewed to low complexity. Asn110, Asn125, and Asn442 each carry an N-linked (GlcNAc...) asparagine glycan.

The protein belongs to the glycosyltransferase 34 family.

The protein resides in the golgi apparatus membrane. Functionally, probable glycosyltransferase that may be involved in the biosynthesis of xyloglucan. This Oryza sativa subsp. indica (Rice) protein is Probable glycosyltransferase 3.